The following is a 192-amino-acid chain: Elongation factor P (192 aa).

Belongs to the elongation factor P family.

It is found in the cytoplasm. It functions in the pathway protein biosynthesis; polypeptide chain elongation. Functionally, involved in peptide bond synthesis. Stimulates efficient translation and peptide-bond synthesis on native or reconstituted 70S ribosomes in vitro. Probably functions indirectly by altering the affinity of the ribosome for aminoacyl-tRNA, thus increasing their reactivity as acceptors for peptidyl transferase. This is Elongation factor P from Borrelia hermsii (strain HS1 / DAH).